A 204-amino-acid polypeptide reads, in one-letter code: Putative uracil phosphoribosyltransferase urg2 (204 aa).

Residues Arg75, Arg100, and Asp126–Thr134 contribute to the 5-phospho-alpha-D-ribose 1-diphosphate site. D-ribose 5-phosphate is bound at residue Tyr187. Uracil is bound by residues Leu188 and Gly193–Ile195. Position 194 (Asp194) interacts with 5-phospho-alpha-D-ribose 1-diphosphate.

The protein belongs to the UPRTase family. Requires Mg(2+) as cofactor.

It is found in the cytoplasm. Its subcellular location is the nucleus. It catalyses the reaction UMP + diphosphate = 5-phospho-alpha-D-ribose 1-diphosphate + uracil. Its pathway is pyrimidine metabolism; UMP biosynthesis via salvage pathway; UMP from uracil: step 1/1. With respect to regulation, allosterically activated by GTP. Catalyzes the conversion of uracil and 5-phospho-alpha-D-ribose 1-diphosphate (PRPP) to UMP and diphosphate. This chain is Putative uracil phosphoribosyltransferase urg2, found in Schizosaccharomyces pombe (strain 972 / ATCC 24843) (Fission yeast).